The primary structure comprises 197 residues: Recombination protein RecR (197 aa).

The segment at 56–71 adopts a C4-type zinc-finger fold; the sequence is CQQCRNLSETEICGFC. Residues 79–174 enclose the Toprim domain; it reads DQLCIVETPT…SVTRLAQGIP (96 aa).

Belongs to the RecR family.

In terms of biological role, may play a role in DNA repair. It seems to be involved in an RecBC-independent recombinational process of DNA repair. It may act with RecF and RecO. This Hydrogenovibrio crunogenus (strain DSM 25203 / XCL-2) (Thiomicrospira crunogena) protein is Recombination protein RecR.